The primary structure comprises 1160 residues: Carbamoyl phosphate synthase arginine-specific large chain, mitochondrial (1160 aa).

Residues 81-478 (AEHEKVKKVV…SLQKALRQVD (398 aa)) are carboxyphosphate synthetic domain. Residues arginine 208, arginine 248, glycine 254, glycine 255, lysine 285, leucine 287, glutamate 292, glycine 318, isoleucine 319, histidine 320, glutamine 361, and glutamate 375 each coordinate ATP. The ATP-grasp 1 domain maps to 212-404 (AKALNEINIP…LAYTAAKIAL (193 aa)). Residues glutamine 361, glutamate 375, and asparagine 377 each coordinate Mg(2+). Mn(2+) is bound by residues glutamine 361, glutamate 375, and asparagine 377. Positions 479-623 (PSFLGFMAMP…YTSYNASSHD (145 aa)) are oligomerization domain. Residues 624-1012 (IDFNEHGTMV…AYWAALQSTQ (389 aa)) are carbamoyl phosphate synthetic domain. In terms of domain architecture, ATP-grasp 2 spans 748–946 (SQILDKIGVD…FIDVATRSII (199 aa)). 10 residues coordinate ATP: arginine 784, lysine 823, isoleucine 825, glutamate 830, glycine 855, valine 856, histidine 857, serine 858, glutamine 898, and glutamate 917. Mg(2+) is bound by residues glutamine 898, glutamate 917, and asparagine 919. Mn(2+) is bound by residues glutamine 898, glutamate 917, and asparagine 919. Residues 1013–1144 (NFKIPLPGQG…PSVLSEKKEM (132 aa)) form an allosteric domain region. Positions 1014-1160 (FKIPLPGQGI…WSEWIGSHDL (147 aa)) constitute an MGS-like domain.

The protein belongs to the CarB family. Heterodimer composed of 2 chains; the small (or glutamine) chain promotes the hydrolysis of glutamine to ammonia, which is used by the large (or ammonia) chain to synthesize carbamoyl phosphate. It depends on Mg(2+) as a cofactor. The cofactor is Mn(2+).

The protein localises to the mitochondrion. It catalyses the reaction hydrogencarbonate + L-glutamine + 2 ATP + H2O = carbamoyl phosphate + L-glutamate + 2 ADP + phosphate + 2 H(+). The catalysed reaction is hydrogencarbonate + NH4(+) + 2 ATP = carbamoyl phosphate + 2 ADP + phosphate + 2 H(+). Its pathway is amino-acid biosynthesis; L-arginine biosynthesis; carbamoyl phosphate from bicarbonate: step 1/1. In terms of biological role, large subunit of the arginine-specific carbamoyl phosphate synthase (CPSase). CPSase catalyzes the formation of carbamoyl phosphate from the ammonia moiety of glutamine, hydrogencarbonate, and phosphate donated by ATP, the first step of the arginine biosynthetic pathway. The large subunit (synthetase) binds the substrates ammonia (free or transferred from glutamine from the small subunit), hydrogencarbonate and ATP and carries out an ATP-coupled ligase reaction, activating hydrogencarbonate by forming carboxy phosphate which reacts with ammonia to form carbamoyl phosphate. The protein is Carbamoyl phosphate synthase arginine-specific large chain, mitochondrial (arg4) of Schizosaccharomyces pombe (strain 972 / ATCC 24843) (Fission yeast).